Consider the following 518-residue polypeptide: Protease Do-like 4, mitochondrial (518 aa).

Residues Met-1–Phe-23 constitute a mitochondrion transit peptide. Residues Glu-98 to Leu-262 are serine protease. Catalysis depends on charge relay system residues His-116, Asp-147, and Ser-225. Residues Asp-278–Glu-358 enclose the PDZ domain.

It belongs to the peptidase S1C family.

The protein resides in the mitochondrion membrane. Its function is as follows. Putative serine protease. The sequence is that of Protease Do-like 4, mitochondrial (DEGP4) from Arabidopsis thaliana (Mouse-ear cress).